A 663-amino-acid polypeptide reads, in one-letter code: 4-hydroxy-3-methylbut-2-en-1-yl diphosphate synthase (flavodoxin) (663 aa).

[4Fe-4S] cluster is bound by residues Cys-568, Cys-571, Cys-602, and Glu-609.

Belongs to the IspG family. The cofactor is [4Fe-4S] cluster.

It carries out the reaction (2E)-4-hydroxy-3-methylbut-2-enyl diphosphate + oxidized [flavodoxin] + H2O + 2 H(+) = 2-C-methyl-D-erythritol 2,4-cyclic diphosphate + reduced [flavodoxin]. It participates in isoprenoid biosynthesis; isopentenyl diphosphate biosynthesis via DXP pathway; isopentenyl diphosphate from 1-deoxy-D-xylulose 5-phosphate: step 5/6. Functionally, converts 2C-methyl-D-erythritol 2,4-cyclodiphosphate (ME-2,4cPP) into 1-hydroxy-2-methyl-2-(E)-butenyl 4-diphosphate. The protein is 4-hydroxy-3-methylbut-2-en-1-yl diphosphate synthase (flavodoxin) of Leptospira borgpetersenii serovar Hardjo-bovis (strain L550).